Consider the following 688-residue polypeptide: Methionine--tRNA ligase (688 aa).

A 'HIGH' region motif is present at residues 13–23 (PYANGQIHIGH). Residues Cys-144, Cys-147, Cys-157, and Cys-160 each contribute to the Zn(2+) site. Positions 335–339 (KMSKS) match the 'KMSKS' region motif. ATP is bound at residue Lys-338. In terms of domain architecture, tRNA-binding spans 582–688 (DFAKIDLRVA…SGAVPGMRIG (107 aa)).

This sequence belongs to the class-I aminoacyl-tRNA synthetase family. MetG type 1 subfamily. In terms of assembly, homodimer. Zn(2+) is required as a cofactor.

The protein resides in the cytoplasm. It catalyses the reaction tRNA(Met) + L-methionine + ATP = L-methionyl-tRNA(Met) + AMP + diphosphate. Its function is as follows. Is required not only for elongation of protein synthesis but also for the initiation of all mRNA translation through initiator tRNA(fMet) aminoacylation. This is Methionine--tRNA ligase from Cupriavidus pinatubonensis (strain JMP 134 / LMG 1197) (Cupriavidus necator (strain JMP 134)).